Reading from the N-terminus, the 122-residue chain is Large ribosomal subunit protein uL18 (122 aa).

It belongs to the universal ribosomal protein uL18 family. Part of the 50S ribosomal subunit; part of the 5S rRNA/L5/L18/L25 subcomplex. Contacts the 5S and 23S rRNAs.

Functionally, this is one of the proteins that bind and probably mediate the attachment of the 5S RNA into the large ribosomal subunit, where it forms part of the central protuberance. The protein is Large ribosomal subunit protein uL18 of Citrifermentans bemidjiense (strain ATCC BAA-1014 / DSM 16622 / JCM 12645 / Bem) (Geobacter bemidjiensis).